Consider the following 308-residue polypeptide: Serine/threonine-protein phosphatase PP1 (308 aa).

4 residues coordinate Mn(2+): D64, H66, D92, and N124. H125 serves as the catalytic Proton donor. Residues H173 and H248 each contribute to the Mn(2+) site.

It belongs to the PPP phosphatase family. PP-1 subfamily. Mn(2+) serves as cofactor.

The protein localises to the cytoplasm. It carries out the reaction O-phospho-L-seryl-[protein] + H2O = L-seryl-[protein] + phosphate. It catalyses the reaction O-phospho-L-threonyl-[protein] + H2O = L-threonyl-[protein] + phosphate. This Neurospora crassa (strain ATCC 24698 / 74-OR23-1A / CBS 708.71 / DSM 1257 / FGSC 987) protein is Serine/threonine-protein phosphatase PP1 (pph-3).